Here is a 475-residue protein sequence, read N- to C-terminus: Pregnancy-specific glycoprotein 22 (475 aa).

An N-terminal signal peptide occupies residues 1 to 35; sequence MEVSSELLSNGWTSWQRVLLTASLLTCWLLPITAG. Ig-like V-type domains are found at residues 44-140, 162-260, and 280-380; these read KLVE…FLQV, PASV…YLQV, and PVPP…QVNV. Residues Asn-103, Asn-110, and Asn-231 are each glycosylated (N-linked (GlcNAc...) asparagine). An Ig-like C2-type domain is found at 387 to 471; the sequence is PVMRVTDSTV…SKTSLPVRLT (85 aa). A disulfide bridge links Cys-406 with Cys-454.

This sequence belongs to the immunoglobulin superfamily. CEA family.

Its subcellular location is the secreted. Functionally, may have an angiogenic function during early placental development. Binds to cell-surface heparan sulfate proteoglycans (HSPGs), and stimulates secretion of the proangiogenic factors VEGFA and TGFB from uterine dendritic cells and natural killer cells. Also induces endothelial tube formation in vitro. The protein is Pregnancy-specific glycoprotein 22 of Mus musculus (Mouse).